A 1017-amino-acid polypeptide reads, in one-letter code: DNA polymerase (1017 aa).

This sequence belongs to the DNA polymerase type-B family. As to quaternary structure, heterodimer with the terminal protein; this heterodimer binds to bp 9 to 18 of the genome. Forms a complex with viral pTP, DBP and hosts NFIA and POU2F1/OCT1 for initiation of replication.

Its subcellular location is the host nucleus. It catalyses the reaction DNA(n) + a 2'-deoxyribonucleoside 5'-triphosphate = DNA(n+1) + diphosphate. Eukaryotic-type DNA polymerase involved in viral genomic replication. DNA synthesis is protein primed, and acts in a strand displacement replication. Assembles in complex with viral pTP, DBP, host NFIA and host POU2F1/OCT1 on viral origin of replication. The polymerase covalently transfers dCMP onto pTP, thereby initiating complementary strand synthesis. The sequence is that of DNA polymerase from Bovine adenovirus 2 (BAdV-2).